Here is a 404-residue protein sequence, read N- to C-terminus: Na(+)/H(+) antiporter NhaA 2 (404 aa).

11 consecutive transmembrane segments (helical) span residues 24-44 (GIIL…SFSG), 67-87 (VLHW…GMEI), 103-123 (ILPI…YALF), 132-152 (GWGI…SLVA), 161-181 (VFLT…IAIF), 184-204 (SQIS…LILA), 216-236 (IILG…ATIA), 266-286 (TPWS…GIII), 303-323 (IIFG…FILI), 339-359 (LYGA…VSSL), and 372-392 (MCIM…FKFI).

Belongs to the NhaA Na(+)/H(+) (TC 2.A.33) antiporter family.

The protein localises to the cell membrane. It catalyses the reaction Na(+)(in) + 2 H(+)(out) = Na(+)(out) + 2 H(+)(in). In terms of biological role, na(+)/H(+) antiporter that extrudes sodium in exchange for external protons. The protein is Na(+)/H(+) antiporter NhaA 2 of Clostridium beijerinckii (strain ATCC 51743 / NCIMB 8052) (Clostridium acetobutylicum).